We begin with the raw amino-acid sequence, 206 residues long: Large ribosomal subunit protein uL4 (206 aa).

The interval 47–76 (GTQSAKTRAEVSGGGIKPWRQKGTGRARQG) is disordered.

This sequence belongs to the universal ribosomal protein uL4 family. Part of the 50S ribosomal subunit.

Its function is as follows. One of the primary rRNA binding proteins, this protein initially binds near the 5'-end of the 23S rRNA. It is important during the early stages of 50S assembly. It makes multiple contacts with different domains of the 23S rRNA in the assembled 50S subunit and ribosome. In terms of biological role, forms part of the polypeptide exit tunnel. This is Large ribosomal subunit protein uL4 from Clostridium botulinum (strain Okra / Type B1).